The following is a 1400-amino-acid chain: DNA-directed RNA polymerase subunit beta' (1400 aa).

Residues Cys-70, Cys-72, Cys-85, and Cys-88 each coordinate Zn(2+). The Mg(2+) site is built by Asp-460, Asp-462, and Asp-464. Zn(2+)-binding residues include Cys-814, Cys-889, Cys-896, and Cys-899.

The protein belongs to the RNA polymerase beta' chain family. In terms of assembly, the RNAP catalytic core consists of 2 alpha, 1 beta, 1 beta' and 1 omega subunit. When a sigma factor is associated with the core the holoenzyme is formed, which can initiate transcription. Mg(2+) serves as cofactor. The cofactor is Zn(2+).

It catalyses the reaction RNA(n) + a ribonucleoside 5'-triphosphate = RNA(n+1) + diphosphate. Its function is as follows. DNA-dependent RNA polymerase catalyzes the transcription of DNA into RNA using the four ribonucleoside triphosphates as substrates. The polypeptide is DNA-directed RNA polymerase subunit beta' (Alcanivorax borkumensis (strain ATCC 700651 / DSM 11573 / NCIMB 13689 / SK2)).